A 576-amino-acid chain; its full sequence is Sulfite reductase [NADPH] hemoprotein beta-component (576 aa).

Cys434, Cys440, Cys479, and Cys483 together coordinate [4Fe-4S] cluster. Siroheme is bound at residue Cys483.

Belongs to the nitrite and sulfite reductase 4Fe-4S domain family. In terms of assembly, alpha(8)-beta(8). The alpha component is a flavoprotein, the beta component is a hemoprotein. Siroheme serves as cofactor. The cofactor is [4Fe-4S] cluster.

The catalysed reaction is hydrogen sulfide + 3 NADP(+) + 3 H2O = sulfite + 3 NADPH + 4 H(+). Its pathway is sulfur metabolism; hydrogen sulfide biosynthesis; hydrogen sulfide from sulfite (NADPH route): step 1/1. Component of the sulfite reductase complex that catalyzes the 6-electron reduction of sulfite to sulfide. This is one of several activities required for the biosynthesis of L-cysteine from sulfate. This chain is Sulfite reductase [NADPH] hemoprotein beta-component, found in Oceanobacillus iheyensis (strain DSM 14371 / CIP 107618 / JCM 11309 / KCTC 3954 / HTE831).